The sequence spans 1270 residues: Breakpoint cluster region protein (1270 aa).

At Met1 the chain carries N-acetylmethionine. A kinase region spans residues Met1–Ala428. Residues Val28 to Arg55 are a coiled coil. Positions Lys67–Ala173 are disordered. The span at Gly121–Ser139 shows a compositional bias: low complexity. Phosphoserine occurs at positions 122 and 139. The residue at position 178 (Tyr178) is a Phosphotyrosine; by HCK. A binding to ABL SH2-domain region spans residues Ser198–Thr387. 3 disordered regions span residues Ile201–Asp249, Lys295–Gln396, and Thr412–Leu481. Ser203, Ser216, and Ser237 each carry phosphoserine. Tyr247 is modified (phosphotyrosine; by FES). Low complexity-rich tracts occupy residues Ser348 to Ser358 and Ser371 to Ser384. A phosphoserine mark is found at Ser358, Ser379, and Ser384. Thr387 bears the Phosphothreonine mark. 2 positions are modified to phosphoserine: Ser461 and Ser465. The residue at position 473 (Arg473) is an Omega-N-methylarginine. A phosphoserine mark is found at Ser475 and Ser487. The DH domain occupies Met497–Glu690. Phosphotyrosine is present on Tyr553. Thr640 is subject to Phosphothreonine. Tyr643 bears the Phosphotyrosine mark. Residue Thr692 is modified to Phosphothreonine. The region spanning Gln707–Lys865 is the PH domain. The C2 domain maps to His892–Ile1019. The region spanning Val1053 to Tyr1247 is the Rho-GAP domain. Ser1263 bears the Phosphoserine mark.

In terms of assembly, homotetramer. Interacts with PDZK1. Interacts with HCK, FES/FPS, ABL1, PIK3R1 and GRB2. May interact with CCPG1. Interacts with SH2D5. Interacts with DLG4. In terms of processing, autophosphorylated. Phosphorylated by FES/FPS on tyrosine residues, leading to down-regulation of the BCR kinase activity. Phosphorylation at Tyr-178 by HCK is important for interaction with GRB2. In terms of tissue distribution, expressed in brain. In hippocampal subregions, most abundant in the CA1 region and expressed at successively lower levels in the dentate gyrus and the CA3 region.

The protein localises to the postsynaptic density. The protein resides in the cell projection. Its subcellular location is the dendritic spine. It is found in the axon. It localises to the synapse. The catalysed reaction is L-seryl-[protein] + ATP = O-phospho-L-seryl-[protein] + ADP + H(+). It catalyses the reaction L-threonyl-[protein] + ATP = O-phospho-L-threonyl-[protein] + ADP + H(+). In terms of biological role, protein with a unique structure having two opposing regulatory activities toward small GTP-binding proteins. The C-terminus is a GTPase-activating protein (GAP) domain which stimulates GTP hydrolysis by RAC1, RAC2 and CDC42. Accelerates the intrinsic rate of GTP hydrolysis of RAC1 or CDC42, leading to down-regulation of the active GTP-bound form. The central Dbl homology (DH) domain functions as guanine nucleotide exchange factor (GEF) that modulates the GTPases CDC42, RHOA and RAC1. Promotes the conversion of CDC42, RHOA and RAC1 from the GDP-bound to the GTP-bound form. The amino terminus contains an intrinsic kinase activity. Functions as an important negative regulator of neuronal RAC1 activity. Regulates macrophage functions such as CSF1-directed motility and phagocytosis through the modulation of RAC1 activity. Plays a major role as a RHOA GEF in keratinocytes being involved in focal adhesion formation and keratinocyte differentiation. This chain is Breakpoint cluster region protein, found in Mus musculus (Mouse).